A 92-amino-acid chain; its full sequence is Large ribosomal subunit protein bL36m (92 aa).

Residues 1–54 (MASLGRKFFAVGVLSRVFPSAFNAQKGLLKNASMFLTPAFRLSPSLLPWNFSRG) constitute a mitochondrion transit peptide.

The protein belongs to the bacterial ribosomal protein bL36 family. As to quaternary structure, component of the mitochondrial large ribosomal subunit (mt-LSU). Mature yeast 74S mitochondrial ribosomes consist of a small (37S) and a large (54S) subunit. The 37S small subunit contains a 15S ribosomal RNA (15S mt-rRNA) and at least 32 different proteins. The 54S large subunit contains a 21S rRNA (21S mt-rRNA) and at least 45 different proteins. bL36m has a zinc binding site.

The protein resides in the mitochondrion. Functionally, component of the mitochondrial ribosome (mitoribosome), a dedicated translation machinery responsible for the synthesis of mitochondrial genome-encoded proteins, including at least some of the essential transmembrane subunits of the mitochondrial respiratory chain. The mitoribosomes are attached to the mitochondrial inner membrane and translation products are cotranslationally integrated into the membrane. bL36m may be involved in a process influencing telomere capping. This Schizosaccharomyces pombe (strain 972 / ATCC 24843) (Fission yeast) protein is Large ribosomal subunit protein bL36m (rtc6).